We begin with the raw amino-acid sequence, 264 residues long: Gap junction beta-1 protein (264 aa).

Residues 1–22 lie on the Cytoplasmic side of the membrane; sequence MNWAGLYAILSGVNRHSTSIGR. A helical transmembrane segment spans residues 23 to 45; it reads IWLSVVFIFRIMVLVAAAESVWG. Residues 46–75 are Extracellular-facing; the sequence is DEKSAFTCNTQQPGCNSVCYDHFFPISHIR. The chain crosses the membrane as a helical span at residues 76 to 98; that stretch reads LWALQLIIVSTPALLVAMHVAHL. Topologically, residues 99-130 are cytoplasmic; sequence QHQEKKELRLSRHVKDQELAEVKKHKVKISGT. Residues 131-153 traverse the membrane as a helical segment; the sequence is LWWTYISSVFFRIIFEAAFMYIF. Topologically, residues 154–191 are extracellular; that stretch reads YLIYPGYSMIRLLKCDAYPCPNTVDCFVSRPTEKTIFT. A helical membrane pass occupies residues 192 to 214; sequence VFMLVASGVCIVLNVAEVFFLIA. The Cytoplasmic portion of the chain corresponds to 215-264; the sequence is QACTRRARRHRDSGSISKEHQQNEMNLLITGGSIIKRSAGQEKGDHCSTS.

This sequence belongs to the connexin family. Beta-type (group I) subfamily. As to quaternary structure, a connexon is composed of a hexamer of connexins. As to expression, lung, liver, intestines, stomach and kidney.

It is found in the cell membrane. The protein resides in the cell junction. The protein localises to the gap junction. Its function is as follows. One gap junction consists of a cluster of closely packed pairs of transmembrane channels, the connexons, through which materials of low MW diffuse from one cell to a neighboring cell. In Xenopus laevis (African clawed frog), this protein is Gap junction beta-1 protein (gjb1).